A 115-amino-acid polypeptide reads, in one-letter code: Evasin P1181 (115 aa).

Positions 1–25 are cleaved as a signal peptide; that stretch reads MALNWSFRVIFVSAMWCALLKFATL. 4 cysteine pairs are disulfide-bonded: Cys-38/Cys-58, Cys-54/Cys-94, Cys-70/Cys-99, and Cys-89/Cys-108. Asn-45, Asn-72, and Asn-103 each carry an N-linked (GlcNAc...) asparagine glycan.

It is found in the secreted. Its function is as follows. Salivary chemokine-binding protein which binds to host chemokines CCL3 and CCL4. This chain is Evasin P1181, found in Amblyomma maculatum (Gulf Coast tick).